The following is a 224-amino-acid chain: 2,5-diamino-6-ribosylamino-4(3H)-pyrimidinone 5'-phosphate reductase (224 aa).

Residues Thr57, Asp61, 82–85 (STAN), Val131, and 153–156 (GASI) each bind NADP(+).

It belongs to the HTP reductase family. In terms of assembly, homodimer.

The enzyme catalyses 2,5-diamino-6-(1-D-ribitylamino)pyrimidin-4(3H)-one 5'-phosphate + NADP(+) = 2,5-diamino-6-(1-D-ribosylamino)pyrimidin-4(3H)-one 5'-phosphate + NADPH + H(+). It catalyses the reaction 2,5-diamino-6-(1-D-ribitylamino)pyrimidin-4(3H)-one 5'-phosphate + NAD(+) = 2,5-diamino-6-(1-D-ribosylamino)pyrimidin-4(3H)-one 5'-phosphate + NADH + H(+). Its pathway is cofactor biosynthesis; riboflavin biosynthesis. Functionally, catalyzes an early step in riboflavin biosynthesis, the NADPH-dependent reduction of the ribose side chain of 2,5-diamino-6-ribosylamino-4(3H)-pyrimidinone 5'-phosphate, yielding 2,5-diamino-6-ribitylamino-4(3H)-pyrimidinone 5'-phosphate. This is 2,5-diamino-6-ribosylamino-4(3H)-pyrimidinone 5'-phosphate reductase (ribD2) from Aquifex aeolicus (strain VF5).